The following is a 237-amino-acid chain: Ribonuclease PH (237 aa).

Phosphate contacts are provided by residues R86 and 124–126 (GTR).

Belongs to the RNase PH family. In terms of assembly, homohexameric ring arranged as a trimer of dimers.

The enzyme catalyses tRNA(n+1) + phosphate = tRNA(n) + a ribonucleoside 5'-diphosphate. Phosphorolytic 3'-5' exoribonuclease that plays an important role in tRNA 3'-end maturation. Removes nucleotide residues following the 3'-CCA terminus of tRNAs; can also add nucleotides to the ends of RNA molecules by using nucleoside diphosphates as substrates, but this may not be physiologically important. Probably plays a role in initiation of 16S rRNA degradation (leading to ribosome degradation) during starvation. The sequence is that of Ribonuclease PH from Methylorubrum extorquens (strain CM4 / NCIMB 13688) (Methylobacterium extorquens).